A 197-amino-acid chain; its full sequence is Protein GrpE (197 aa).

Residues 1 to 41 (MSSKEQKTPEGQAPEEIITEQHEEVEAVEPDASAEQVDPRD) are disordered.

Belongs to the GrpE family. As to quaternary structure, homodimer.

Its subcellular location is the cytoplasm. Functionally, participates actively in the response to hyperosmotic and heat shock by preventing the aggregation of stress-denatured proteins, in association with DnaK and GrpE. It is the nucleotide exchange factor for DnaK and may function as a thermosensor. Unfolded proteins bind initially to DnaJ; upon interaction with the DnaJ-bound protein, DnaK hydrolyzes its bound ATP, resulting in the formation of a stable complex. GrpE releases ADP from DnaK; ATP binding to DnaK triggers the release of the substrate protein, thus completing the reaction cycle. Several rounds of ATP-dependent interactions between DnaJ, DnaK and GrpE are required for fully efficient folding. The sequence is that of Protein GrpE from Enterobacter sp. (strain 638).